The primary structure comprises 147 residues: Basic phospholipase A2 beta-bungarotoxin A4 chain (147 aa).

The N-terminal stretch at 1–19 is a signal peptide; the sequence is MNPAHLLVLSAVCVSLLGA. The propeptide occupies 20–27; sequence ANIPPHPL. Cystine bridges form between Cys54–Cys146, Cys56–Cys72, Cys71–Cys127, Cys78–Cys120, Cys88–Cys113, and Cys106–Cys118. Ca(2+) is bound by residues Tyr55, Gly57, and Gly59. The active site involves His75. Asp76 serves as a coordination point for Ca(2+). The active site involves Asp121.

This sequence belongs to the phospholipase A2 family. Group I subfamily. D49 sub-subfamily. Heterodimer; disulfide-linked. The A chain has phospholipase A2 activity and the B chain shows homology with the basic protease inhibitors. The cofactor is Ca(2+). Expressed by the venom gland.

It is found in the secreted. It carries out the reaction a 1,2-diacyl-sn-glycero-3-phosphocholine + H2O = a 1-acyl-sn-glycero-3-phosphocholine + a fatty acid + H(+). Snake venom phospholipase A2 (PLA2) that shows presynaptic neurotoxicity. The A chain has phospholipase activity. PLA2 catalyzes the calcium-dependent hydrolysis of the 2-acyl groups in 3-sn-phosphoglycerides. The protein is Basic phospholipase A2 beta-bungarotoxin A4 chain of Bungarus candidus (Malayan krait).